The sequence spans 200 residues: Sperm acrosome developmental regulator (200 aa).

Ser-63 carries the phosphoserine modification. Residues 167–183 (QERRRRRRMRSHASHTS) are compositionally biased toward basic residues. Residues 167–200 (QERRRRRRMRSHASHTSRHSESVQGLKHDARSPL) are disordered. Residues 184 to 200 (RHSESVQGLKHDARSPL) are compositionally biased toward basic and acidic residues.

Its subcellular location is the cytoplasmic vesicle. It is found in the secretory vesicle. The protein resides in the acrosome. In terms of biological role, may play an important role in acrosome formation and nucleus shaping during spermiogenesis. The chain is Sperm acrosome developmental regulator (Spacdr) from Rattus norvegicus (Rat).